The primary structure comprises 387 residues: GTP-binding protein 10 (387 aa).

The Obg domain maps to Gly13 to Ile148. An OBG-type G domain is found at Ala149 to Asp344. GTP contacts are provided by residues Gly155 to Ser162, Asp202 to Leu206, and Asn278 to Asp281.

It belongs to the TRAFAC class OBG-HflX-like GTPase superfamily. OBG GTPase family.

The protein localises to the nucleus. The protein resides in the nucleolus. It is found in the chromosome. In terms of biological role, may be involved in the ribosome maturation process. Complements an ObgE(CgtA) function in E.coli ribosome maturation. Plays a role of GTPase in vitro. When missing, disorganization of the nucleolar architecture is observed. The protein is GTP-binding protein 10 (GTPBP10) of Homo sapiens (Human).